Here is a 120-residue protein sequence, read N- to C-terminus: MTSFAVVARLITRAPRVRASVPTRLVHGTTSTRKDSVCDKATEAQQKVAKKADEGAQTISDAAGNLKDKAKNTAEEAWDKVKDTTEKIKDTVTGKTEETKESIKATAKTVERSMNTKNLK.

The first 19 residues, 1–19 (MTSFAVVARLITRAPRVRA), serve as a signal peptide directing secretion. Disordered stretches follow at residues 48 to 71 (VAKK…DKAK) and 90 to 120 (DTVT…KNLK). Residues 90-103 (DTVTGKTEETKESI) are compositionally biased toward basic and acidic residues.

This is an uncharacterized protein from Arabidopsis thaliana (Mouse-ear cress).